A 91-amino-acid polypeptide reads, in one-letter code: MKPNIHPDNYRTVLFFDSSANEGWMIRSCAETHGKTMVWTDGKEYPLFSLDTSSASHPVYTGKQRNVNTEGRASKFNQRFQSVMSSFRKDK.

The protein belongs to the bacterial ribosomal protein bL31 family. Type B subfamily. As to quaternary structure, part of the 50S ribosomal subunit.

This Neisseria meningitidis serogroup C (strain 053442) protein is Large ribosomal subunit protein bL31B.